The primary structure comprises 67 residues: Protein Tpau_2998 (67 aa).

In Tsukamurella paurometabola (strain ATCC 8368 / DSM 20162 / CCUG 35730 / CIP 100753 / JCM 10117 / KCTC 9821 / NBRC 16120 / NCIMB 702349 / NCTC 13040) (Corynebacterium paurometabolum), this protein is Protein Tpau_2998.